The primary structure comprises 396 residues: Tryptophan synthase beta chain (396 aa).

Lys86 bears the N6-(pyridoxal phosphate)lysine mark.

It belongs to the TrpB family. In terms of assembly, tetramer of two alpha and two beta chains. Pyridoxal 5'-phosphate is required as a cofactor.

The enzyme catalyses (1S,2R)-1-C-(indol-3-yl)glycerol 3-phosphate + L-serine = D-glyceraldehyde 3-phosphate + L-tryptophan + H2O. It participates in amino-acid biosynthesis; L-tryptophan biosynthesis; L-tryptophan from chorismate: step 5/5. In terms of biological role, the beta subunit is responsible for the synthesis of L-tryptophan from indole and L-serine. The protein is Tryptophan synthase beta chain of Blochmanniella pennsylvanica (strain BPEN).